Reading from the N-terminus, the 224-residue chain is Ribose-5-phosphate isomerase A (224 aa).

Substrate contacts are provided by residues 32 to 35 (TGST), 85 to 88 (DGAD), and 98 to 101 (KGGG). The active-site Proton acceptor is the Glu107. Lys125 lines the substrate pocket.

Belongs to the ribose 5-phosphate isomerase family. Homodimer.

The enzyme catalyses aldehydo-D-ribose 5-phosphate = D-ribulose 5-phosphate. It participates in carbohydrate degradation; pentose phosphate pathway; D-ribose 5-phosphate from D-ribulose 5-phosphate (non-oxidative stage): step 1/1. Catalyzes the reversible conversion of ribose-5-phosphate to ribulose 5-phosphate. The sequence is that of Ribose-5-phosphate isomerase A from Pseudomonas putida (strain W619).